We begin with the raw amino-acid sequence, 340 residues long: Phosphoribosylformylglycinamidine cyclo-ligase (340 aa).

It belongs to the AIR synthase family.

Its subcellular location is the cytoplasm. The catalysed reaction is 2-formamido-N(1)-(5-O-phospho-beta-D-ribosyl)acetamidine + ATP = 5-amino-1-(5-phospho-beta-D-ribosyl)imidazole + ADP + phosphate + H(+). The protein operates within purine metabolism; IMP biosynthesis via de novo pathway; 5-amino-1-(5-phospho-D-ribosyl)imidazole from N(2)-formyl-N(1)-(5-phospho-D-ribosyl)glycinamide: step 2/2. In Lactococcus lactis subsp. cremoris (strain MG1363), this protein is Phosphoribosylformylglycinamidine cyclo-ligase.